Here is a 405-residue protein sequence, read N- to C-terminus: F-box/kelch-repeat protein At2g43445 (405 aa).

The region spanning 7-53 (NTNSIYIVSELLEEIFLGLPLKSILKFKTVSKQWRSILESNLFVERR) is the F-box domain. Kelch repeat units lie at residues 146-197 (RDKV…CVNG) and 356-400 (THHD…VVGY).

In Arabidopsis thaliana (Mouse-ear cress), this protein is F-box/kelch-repeat protein At2g43445.